The sequence spans 804 residues: Leucine--tRNA ligase (804 aa).

A 'HIGH' region motif is present at residues 40–51; that stretch reads PYPSGAGLHVGH. Positions 576–580 match the 'KMSKS' region motif; it reads KMSKS. ATP is bound at residue Lys-579.

It belongs to the class-I aminoacyl-tRNA synthetase family.

The protein localises to the cytoplasm. The catalysed reaction is tRNA(Leu) + L-leucine + ATP = L-leucyl-tRNA(Leu) + AMP + diphosphate. This is Leucine--tRNA ligase from Staphylococcus aureus (strain MRSA252).